The sequence spans 382 residues: MTDQRPLTIALVAGETSGDILGAGLIRALKERVPNARFVGVAGPRMQAEGCEAWYEMEELAVMGIVEVLGRLRRLLHIRADLTKRFGELKPDVFVGIDAPDFNITLEGNLKKQGIKTIHYVSPSVWAWRQKRVFKIGRATDLVLAFLPFEKAFYDKYNVPCRFIGHTMADAMPLDPDKNGARDVLGIPYDAHCLALLPGSRGAEVEMLSADFLKTAQLLRQTYPDLEIVVPLVNAKRREQFERIKAEVAPDLSVHLLDGMGREAMVASDAALLASGTAALECMLAKCPMVVGYRMKPFTFWLAKRLVKTDYVSLPNLLAGRELVKELLQEECEPQKLAAALLPLLANGKTSHAMHDTFRELHQQIRCNADEQAAQAVLELAQ.

This sequence belongs to the LpxB family.

It carries out the reaction 2-N,3-O-bis[(3R)-3-hydroxytetradecanoyl]-alpha-D-glucosaminyl 1-phosphate + UDP-2-N,3-O-bis[(3R)-3-hydroxytetradecanoyl]-alpha-D-glucosamine = lipid A disaccharide (E. coli) + UDP + H(+). The catalysed reaction is a lipid X + a UDP-2-N,3-O-bis[(3R)-3-hydroxyacyl]-alpha-D-glucosamine = a lipid A disaccharide + UDP + H(+). It functions in the pathway glycolipid biosynthesis; lipid IV(A) biosynthesis; lipid IV(A) from (3R)-3-hydroxytetradecanoyl-[acyl-carrier-protein] and UDP-N-acetyl-alpha-D-glucosamine: step 5/6. Condensation of UDP-2,3-diacylglucosamine and 2,3-diacylglucosamine-1-phosphate to form lipid A disaccharide, a precursor of lipid A, a phosphorylated glycolipid that anchors the lipopolysaccharide to the outer membrane of the cell. The polypeptide is Lipid-A-disaccharide synthase (Shigella flexneri).